Here is a 549-residue protein sequence, read N- to C-terminus: Cation/acetate symporter ActP (549 aa).

13 helical membrane-spanning segments follow: residues 33-53, 77-97, 103-123, 148-168, 183-203, 206-226, 262-282, 303-323, 355-375, 404-424, 428-448, 464-484, and 493-513; these read WQAI…TYWA, LAIA…ALVF, GLIY…LIAE, ILSA…QMVG, IAVV…GMLA, WVQI…AFMV, ISAL…PHIL, GFMG…IMLV, LFLG…VAGL, VSKI…VLFE, IAFM…PIIL, GGWL…TIWV, and IFPY…GIWF.

Belongs to the sodium:solute symporter (SSF) (TC 2.A.21) family.

Its subcellular location is the cell inner membrane. Functionally, transports acetate. The sequence is that of Cation/acetate symporter ActP from Escherichia fergusonii (strain ATCC 35469 / DSM 13698 / CCUG 18766 / IAM 14443 / JCM 21226 / LMG 7866 / NBRC 102419 / NCTC 12128 / CDC 0568-73).